The chain runs to 266 residues: Small ribosomal subunit protein uS2 (266 aa).

Belongs to the universal ribosomal protein uS2 family.

The chain is Small ribosomal subunit protein uS2 from Paramagnetospirillum magneticum (strain ATCC 700264 / AMB-1) (Magnetospirillum magneticum).